A 399-amino-acid chain; its full sequence is Argininosuccinate synthase (399 aa).

ATP contacts are provided by residues 8 to 16 and A35; that span reads AYSGGLDTS. Y87 contacts L-citrulline. G117 serves as a coordination point for ATP. L-aspartate is bound by residues T119, N123, and D124. Residue N123 participates in L-citrulline binding. L-citrulline-binding residues include R127, S176, S185, E261, and Y273.

This sequence belongs to the argininosuccinate synthase family. Type 1 subfamily. As to quaternary structure, homotetramer.

Its subcellular location is the cytoplasm. The catalysed reaction is L-citrulline + L-aspartate + ATP = 2-(N(omega)-L-arginino)succinate + AMP + diphosphate + H(+). The protein operates within amino-acid biosynthesis; L-arginine biosynthesis; L-arginine from L-ornithine and carbamoyl phosphate: step 2/3. In Buchnera aphidicola subsp. Cinara cedri (strain Cc), this protein is Argininosuccinate synthase.